The chain runs to 154 residues: Nucleoside diphosphate kinase (154 aa).

Positions 12, 60, 88, 94, 105, and 115 each coordinate ATP. The active-site Pros-phosphohistidine intermediate is the His-118.

This sequence belongs to the NDK family. Requires Mg(2+) as cofactor.

It is found in the cytoplasm. The catalysed reaction is a 2'-deoxyribonucleoside 5'-diphosphate + ATP = a 2'-deoxyribonucleoside 5'-triphosphate + ADP. It catalyses the reaction a ribonucleoside 5'-diphosphate + ATP = a ribonucleoside 5'-triphosphate + ADP. Its function is as follows. Major role in the synthesis of nucleoside triphosphates other than ATP. The ATP gamma phosphate is transferred to the NDP beta phosphate via a ping-pong mechanism, using a phosphorylated active-site intermediate. This is Nucleoside diphosphate kinase from Haloarcula marismortui (strain ATCC 43049 / DSM 3752 / JCM 8966 / VKM B-1809) (Halobacterium marismortui).